Reading from the N-terminus, the 604-residue chain is Elongation factor 4 (604 aa).

The tr-type G domain maps to 7–189 (SKIRNFCIIA…SIVHLVPPPS (183 aa)). Residues 19–24 (DHGKST) and 136–139 (NKID) contribute to the GTP site.

It belongs to the TRAFAC class translation factor GTPase superfamily. Classic translation factor GTPase family. LepA subfamily.

It is found in the cell inner membrane. It carries out the reaction GTP + H2O = GDP + phosphate + H(+). Functionally, required for accurate and efficient protein synthesis under certain stress conditions. May act as a fidelity factor of the translation reaction, by catalyzing a one-codon backward translocation of tRNAs on improperly translocated ribosomes. Back-translocation proceeds from a post-translocation (POST) complex to a pre-translocation (PRE) complex, thus giving elongation factor G a second chance to translocate the tRNAs correctly. Binds to ribosomes in a GTP-dependent manner. In Synechococcus elongatus (strain ATCC 33912 / PCC 7942 / FACHB-805) (Anacystis nidulans R2), this protein is Elongation factor 4.